Reading from the N-terminus, the 973-residue chain is E3 ubiquitin-protein ligase MIB2 (973 aa).

In terms of domain architecture, MIB/HERC2 1 spans 1-80; sequence MDLDPHAGVQ…AHDLLLYDNA (80 aa). The ZZ-type zinc-finger motif lies at 86 to 138; that stretch reads HPNIICDCCKKHGLRGMRWKCRVCFDYDLCTQCYMHNKHDLTHAFERYETSHS. Zn(2+) is bound by residues cysteine 91, cysteine 94, cysteine 106, cysteine 109, cysteine 115, cysteine 118, histidine 124, and histidine 128. An MIB/HERC2 2 domain is found at 149 to 227; the sequence is LPRIPLRGIF…KVDLRCVGEA (79 aa). Serine 251 is modified (phosphoserine). ANK repeat units follow at residues 480–509, 513–542, 546–575, 579–611, 615–644, 649–679, 683–712, 716–744, and 785–814; these read QGRTALQVAAYLGQVELVRLLLQARASMDL, EGNTVLHYTAMGNQPEATRVLLSAGCAVDA, TRSTALHVAVQRGFLEVVKILCERGCDVNL, HADTPLHSAISAGAGASSIVEVLTEVPGIDVTA, QGFTLLHHASLKGHVLAVRKILARARQLVD, DGFTALHLAALNNHREVAQVLIREGRCDVNV, KLQSPLHLAVQQAHLGLVPLLVDAGCSVNT, EGDTALHVALQRHQLLPLVADRAGGDPGP, and RGRSPLDLATEGRVLKALQGCAQRFRERQA. RING-type zinc fingers lie at residues 850-885 and 929-962; these read CLVCSELALLILFSPCQHRTVCEECARRMKKCIRCQ and CPICIDSHIRLVFQCGHGACAPCGAALNACPICR.

In terms of assembly, interacts with actin monomer. Ubiquitinated. Possibly via autoubiquitination. Highly expressed in brain, heart, liver and kidney.

Its subcellular location is the cytoplasm. It is found in the endosome. The enzyme catalyses S-ubiquitinyl-[E2 ubiquitin-conjugating enzyme]-L-cysteine + [acceptor protein]-L-lysine = [E2 ubiquitin-conjugating enzyme]-L-cysteine + N(6)-ubiquitinyl-[acceptor protein]-L-lysine.. It participates in protein modification; protein ubiquitination. E3 ubiquitin-protein ligase that mediates ubiquitination of Delta receptors, which act as ligands of Notch proteins. Positively regulates the Delta-mediated Notch signaling by ubiquitinating the intracellular domain of Delta, leading to endocytosis of Delta receptors. The protein is E3 ubiquitin-protein ligase MIB2 (Mib2) of Mus musculus (Mouse).